Here is a 670-residue protein sequence, read N- to C-terminus: DNA ligase (670 aa).

NAD(+) is bound by residues 32–36 (DAYYD), 81–82 (SL), and glutamate 110. The N6-AMP-lysine intermediate role is filled by lysine 112. Arginine 133, glutamate 170, lysine 289, and lysine 313 together coordinate NAD(+). Residues cysteine 407, cysteine 410, cysteine 425, and cysteine 431 each coordinate Zn(2+). The BRCT domain maps to 590 to 670 (EDELRLKGQT…ELLVFLGLAG (81 aa)).

The protein belongs to the NAD-dependent DNA ligase family. LigA subfamily. It depends on Mg(2+) as a cofactor. Mn(2+) serves as cofactor.

The catalysed reaction is NAD(+) + (deoxyribonucleotide)n-3'-hydroxyl + 5'-phospho-(deoxyribonucleotide)m = (deoxyribonucleotide)n+m + AMP + beta-nicotinamide D-nucleotide.. DNA ligase that catalyzes the formation of phosphodiester linkages between 5'-phosphoryl and 3'-hydroxyl groups in double-stranded DNA using NAD as a coenzyme and as the energy source for the reaction. It is essential for DNA replication and repair of damaged DNA. This is DNA ligase from Shewanella denitrificans (strain OS217 / ATCC BAA-1090 / DSM 15013).